The following is a 199-amino-acid chain: Glycerol-3-phosphate acyltransferase (199 aa).

5 helical membrane passes run 5–25 (AFLV…VALV), 51–71 (KLGV…VLCA), 79–99 (VFLS…VFLY), 112–132 (VFLG…VAVI), and 153–173 (CAWL…GLVI).

It belongs to the PlsY family. In terms of assembly, probably interacts with PlsX.

Its subcellular location is the cell inner membrane. It carries out the reaction an acyl phosphate + sn-glycerol 3-phosphate = a 1-acyl-sn-glycero-3-phosphate + phosphate. The protein operates within lipid metabolism; phospholipid metabolism. Its function is as follows. Catalyzes the transfer of an acyl group from acyl-phosphate (acyl-PO(4)) to glycerol-3-phosphate (G3P) to form lysophosphatidic acid (LPA). This enzyme utilizes acyl-phosphate as fatty acyl donor, but not acyl-CoA or acyl-ACP. The sequence is that of Glycerol-3-phosphate acyltransferase from Solidesulfovibrio magneticus (strain ATCC 700980 / DSM 13731 / RS-1) (Desulfovibrio magneticus).